We begin with the raw amino-acid sequence, 411 residues long: TGTYRGDSETQLERVNVYYNEASCGRYVPRAVLMDLEPGTMDSVRSGPYGQIFRPDNFVFGQSGAGNNWAKGHYTEGAELIDSVLDVVRKEAENCDCLQGFQVCHSLGGGTGSGMGTLLISKIREEYPDRMMXTFSVFPSPKVSDTVVEPYNATLSVHQLVENADECMVLDNEALYDICFRTLKLVTPTFGDLNHLISATMSGVTCCLRFPGQLNSDLRKLAVNLIPFPRLHFFMVGFAPLTSRGSQQYRALTVPELTQQMRDAKNMMCAADPRHGRYLTASAMFRGKMSTKEVDEQMINVQNKNSSYFVEWIPNNVKSSVCDIPPVGLKMACTFIGNSTSIQEMFRRVRDQFTAMFRXKAFLHWYTGEGMDEMEFTEAESNMNDLVSEYQQYQDATAEPEGXYEEDYDEA.

GTP contacts are provided by Glu37, Ser106, Gly110, Thr111, Gly112, Asn172, and Asn194. A Mg(2+)-binding site is contributed by Glu37. Residues 392–411 (QYQDATAEPEGXYEEDYDEA) are disordered. Residues 402–411 (GXYEEDYDEA) show a composition bias toward acidic residues.

It belongs to the tubulin family. As to quaternary structure, dimer of alpha and beta chains. A typical microtubule is a hollow water-filled tube with an outer diameter of 25 nm and an inner diameter of 15 nM. Alpha-beta heterodimers associate head-to-tail to form protofilaments running lengthwise along the microtubule wall with the beta-tubulin subunit facing the microtubule plus end conferring a structural polarity. Microtubules usually have 13 protofilaments but different protofilament numbers can be found in some organisms and specialized cells. It depends on Mg(2+) as a cofactor.

The protein localises to the cytoplasm. It is found in the cytoskeleton. In terms of biological role, tubulin is the major constituent of microtubules, a cylinder consisting of laterally associated linear protofilaments composed of alpha- and beta-tubulin heterodimers. Microtubules grow by the addition of GTP-tubulin dimers to the microtubule end, where a stabilizing cap forms. Below the cap, tubulin dimers are in GDP-bound state, owing to GTPase activity of alpha-tubulin. This is Tubulin beta-2 chain (TUBB2) from Anemia phyllitidis (Fern).